The sequence spans 557 residues: MESESIRRMGNACIPLKRIAYFLCLFSVVLLTEGKKPAKPKCPAVCTCSKDNALCENARSIPRTVPPDVISLSFVRSGFTEISEGSFLFTPSLQLLLFTSNSFDVISDDAFIGLPHLEYLFIENNNIKSISRHTFRGLKSLIHLSLANNNLQTLPKDIFKGLDSLTNVDLRGNSFNCDCKLKWLVEWLGHTNATVEDIYCEGPPEYKKRKINSLSPKDFDCIITEFAKSQDLPYQSLSIDTFSYLNDEYVVIAQPFTGKCIFLEWDHVEKTFRNYDNITGTSTVVCKPIVIDTQLYVIVAQLFGGSHIYKRDGFANKFIKIQDIEVLKIRKPNDIETFKIEDNWYFVVADSSKAGFTTIYKWNGNGFYSHQSLHAWYRDTDVEYLEIARPPLTLRTPHLILSSSSQRPVIYQWSKATQLFINQTDIPNMEDVYAVKHFSVKGDVYICLTRFIGDSKVMKWGGSSFQDIQRMPSRGSMVFQPLQINNYQYAILGSDYSFTQVYNWDAEKAKFVKFQELNVQAPRSFTHVSINKRNFLFASSFKGNTQIYKHVIVDLSA.

An N-terminal signal peptide occupies residues 1-34 (MESESIRRMGNACIPLKRIAYFLCLFSVVLLTEG). Residues 35 to 72 (KKPAKPKCPAVCTCSKDNALCENARSIPRTVPPDVISL) form the LRRNT domain. 3 LRR repeats span residues 92 to 113 (SLQL…AFIG), 116 to 137 (HLEY…TFRG), and 140 to 161 (SLIH…IFKG). One can recognise an LRRCT domain in the interval 173–223 (NSFNCDCKLKWLVEWLGHTNATVEDIYCEGPPEYKKRKINSLSPKDFDCII). N192 carries an N-linked (GlcNAc...) asparagine glycan. EAR repeat units follow at residues 225 to 267 (EFAK…EWDH), 271 to 313 (TFRN…KRDG), 317 to 364 (KFIK…KWNG), 366 to 415 (GFYS…QWSK), 419 to 462 (LFIN…KWGG), 464 to 506 (SFQD…NWDA), and 510 to 552 (KFVK…KHVI). N277 carries an N-linked (GlcNAc...) asparagine glycan. N422 carries an N-linked (GlcNAc...) asparagine glycan.

Oligomer. Interacts with KCNA1 within a complex containing KCNA1, KCNA4 and KCNAB1. Can bind to ADAM11 and ADAM23. Part of a complex containing ADAM22, DLG4/PSD95 and CACNG2 (stargazin). Glycosylated. Expressed in brain. High levels found in hippocampus, thalamic nuclei, neocortex, and molecular and granule cell layers of the cerebellum.

The protein resides in the secreted. The protein localises to the synapse. It is found in the cytoplasm. Functionally, plays a role in suppressing the production of MMP1/3 through the phosphatidylinositol 3-kinase/ERK pathway. Regulates voltage-gated potassium channels assembled from KCNA1, KCNA4 and KCNAB1. It slows down channel inactivation by precluding channel closure mediated by the KCNAB1 subunit. Ligand for ADAM22 that positively regulates synaptic transmission mediated by AMPA-type glutamate receptors. This chain is Leucine-rich glioma-inactivated protein 1 (Lgi1), found in Rattus norvegicus (Rat).